The following is a 532-amino-acid chain: Fatty-acid amide hydrolase 2 (532 aa).

Residues 11 to 31 (LFLLRALGFLIGLVGRAALVL) traverse the membrane as a helical segment. Active-site charge relay system residues include Lys131 and Ser206. The active-site Acyl-ester intermediate is Ser230.

The protein belongs to the amidase family. As to quaternary structure, homodimer. As to expression, expressed in kidney, liver, lung, prostate, heart and ovary.

The protein resides in the membrane. It localises to the lipid droplet. The enzyme catalyses N-(5Z,8Z,11Z,14Z-eicosatetraenoyl)-ethanolamine + H2O = ethanolamine + (5Z,8Z,11Z,14Z)-eicosatetraenoate. The catalysed reaction is (9Z)-octadecenamide + H2O = (9Z)-octadecenoate + NH4(+). It catalyses the reaction N-(9Z-octadecenoyl) ethanolamine + H2O = ethanolamine + (9Z)-octadecenoate. It carries out the reaction N-hexadecanoylethanolamine + H2O = ethanolamine + hexadecanoate. Inhibited by O-aryl carbamates and alpha-keto heterocytes. In terms of biological role, catalyzes the hydrolysis of endogenous amidated lipids like the sleep-inducing lipid oleamide ((9Z)-octadecenamide), the endocannabinoid anandamide (N-(5Z,8Z,11Z,14Z-eicosatetraenoyl)-ethanolamine), as well as other fatty amides, to their corresponding fatty acids, thereby regulating the signaling functions of these molecules. Hydrolyzes monounsaturated substrate anandamide preferentially as compared to polyunsaturated substrates. The sequence is that of Fatty-acid amide hydrolase 2 (FAAH2) from Homo sapiens (Human).